The primary structure comprises 601 residues: Kelch-like ECH-associated protein 1A (601 aa).

In terms of domain architecture, BTB spans 44–117 (MDELRHHEML…VISRLIDFAY (74 aa)). The BACK domain maps to 153–253 (KNLEPSNVIG…LNAVHIYALP (101 aa)). Kelch repeat units lie at residues 292–337 (PTPH…PCSG), 338–388 (LGAC…PRNR), 389–435 (VGVG…ARLG), 436–482 (AGVA…VRSG), 484–529 (GVVC…CRSA), and 530–576 (HGVS…GRSG).

The protein belongs to the KEAP1 family. As to quaternary structure, homodimer and heterodimer; heterodimerizes with keap1b. Component of the BCR(KEAP1) E3 ubiquitin ligase complex, at least composed of 2 molecules of cul3, 2 molecules of keap1 (keap1a and/or keap1b), and rbx1. Interacts with nfe2l2/nrf2; the interaction is direct. Post-translationally, non-enzymatic covalent modifications of reactive cysteines by electrophile metabolites inactivate the BCR(KEAP1) complex. In terms of tissue distribution, widely expressed.

It is found in the cytoplasm. It localises to the nucleus. Its pathway is protein modification; protein ubiquitination. Its activity is regulated as follows. Ubiquitin ligase activity of the BCR(KEAP1) complex is inhibited by oxidative stress and electrophile metabolites such as sulforaphane. Electrophile metabolites react with reactive cysteine residues in keap1 and trigger non-enzymatic covalent modifications of these cysteine residues, leading to inactivate the ubiquitin ligase activity of the BCR(KEAP1) complex. Its function is as follows. Substrate-specific adapter of a BCR (BTB-CUL3-RBX1) E3 ubiquitin ligase complex that regulates the response to oxidative stress by targeting nfe2l2/nrf2 for ubiquitination. Keap1 acts as a key sensor of oxidative and electrophilic stress: in normal conditions, the BCR(KEAP1) complex mediates ubiquitination and degradation of nfe2l2/nrf2, a transcription factor regulating expression of many cytoprotective genes. In response to oxidative stress, different electrophile metabolites trigger non-enzymatic covalent modifications of highly reactive cysteine residues in KEAP1, leading to inactivate the ubiquitin ligase activity of the BCR(KEAP1) complex, promoting nfe2l2/nrf2 nuclear accumulation and expression of phase II detoxifying enzymes. This is Kelch-like ECH-associated protein 1A from Danio rerio (Zebrafish).